Reading from the N-terminus, the 429-residue chain is Zinc metalloproteinase nas-17 (429 aa).

The first 21 residues, Met-1–Ala-21, serve as a signal peptide directing secretion. N-linked (GlcNAc...) asparagine glycosylation occurs at Asn-54. The Peptidase M12A domain occupies Arg-62–Gly-251. 4 cysteine pairs are disulfide-bonded: Cys-104–Cys-250, Cys-125–Cys-144, Cys-252–Cys-272, and Cys-274–Cys-283. Zn(2+) is bound at residue His-152. Glu-153 is a catalytic residue. Positions 156 and 162 each coordinate Zn(2+). The EGF-like domain maps to Asn-245–Asn-284.

Zn(2+) is required as a cofactor.

It localises to the secreted. Functionally, metalloprotease. This chain is Zinc metalloproteinase nas-17 (nas-17), found in Caenorhabditis elegans.